Reading from the N-terminus, the 400-residue chain is Enoyl-[acyl-carrier-protein] reductase [NADH] (400 aa).

Residues 48 to 53 (GASTGY), 74 to 75 (FE), 111 to 112 (DA), and 139 to 140 (LA) contribute to the NAD(+) site. Tyr225 serves as a coordination point for substrate. Tyr235 functions as the Proton donor in the catalytic mechanism. Residues Lys244 and 273 to 275 (VVT) each bind NAD(+).

It belongs to the TER reductase family. In terms of assembly, monomer.

The catalysed reaction is a 2,3-saturated acyl-[ACP] + NAD(+) = a (2E)-enoyl-[ACP] + NADH + H(+). The protein operates within lipid metabolism; fatty acid biosynthesis. Its function is as follows. Involved in the final reduction of the elongation cycle of fatty acid synthesis (FAS II). Catalyzes the reduction of a carbon-carbon double bond in an enoyl moiety that is covalently linked to an acyl carrier protein (ACP). This chain is Enoyl-[acyl-carrier-protein] reductase [NADH], found in Burkholderia ambifaria (strain MC40-6).